The sequence spans 1869 residues: Chitin synthase 6 (1869 aa).

The segment at 1-23 (MAMNLPPLAGSGGAHTQPSLPAL) is disordered. In terms of domain architecture, Myosin motor spans 1 to 778 (MAMNLPPLAG…EIAHLSEASL (778 aa)). Residue 104-111 (GESGSGKS) coordinates ATP. Asparagine 123, asparagine 417, asparagine 426, and asparagine 557 each carry an N-linked (GlcNAc...) asparagine glycan. Disordered regions lie at residues 593 to 612 (KPMR…ARNQ) and 620 to 640 (AEEE…AAKA). Residues 629–640 (ENNSQAGGAAKA) are compositionally biased toward low complexity. Residues asparagine 630 and asparagine 657 are each glycosylated (N-linked (GlcNAc...) asparagine). Positions 655–679 (LDNVTKAVADPSTNSYFVFCLKPND) are actin-binding. 2 consecutive transmembrane segments (helical) span residues 886 to 906 (WLFM…RFIG) and 925 to 945 (LIIW…PMLI). Residues 949 to 1010 (QHVYSAAELS…YAGKDATSLF (62 aa)) enclose the Cytochrome b5 heme-binding domain. Asparagine 1037, asparagine 1062, and asparagine 1165 each carry an N-linked (GlcNAc...) asparagine glycan. The chain crosses the membrane as a helical span at residues 1201–1221 (LVLAISIMLVTIIAFKFFAAL). 2 N-linked (GlcNAc...) asparagine glycosylation sites follow: asparagine 1458 and asparagine 1564. Helical transmembrane passes span 1596 to 1616 (LSTV…VMVI), 1622 to 1642 (VPVT…IIFI), and 1649 to 1669 (MIGW…GLPL). Asparagine 1778 carries N-linked (GlcNAc...) asparagine glycosylation. Residues 1811–1866 (LPSDDALLAEIREILRTADLMTVTKKGIKQELERRFGVPLDAKRAYINSATEALLS) enclose the DEK-C domain.

It in the N-terminal section; belongs to the TRAFAC class myosin-kinesin ATPase superfamily. Myosin family. In the C-terminal section; belongs to the chitin synthase family. Class V subfamily.

It localises to the cell membrane. It catalyses the reaction [(1-&gt;4)-N-acetyl-beta-D-glucosaminyl](n) + UDP-N-acetyl-alpha-D-glucosamine = [(1-&gt;4)-N-acetyl-beta-D-glucosaminyl](n+1) + UDP + H(+). In terms of biological role, polymerizes chitin, a structural polymer of the cell wall and septum, by transferring the sugar moiety of UDP-GlcNAc to the non-reducing end of the growing chitin polymer. Plays a role in cell wall integrity and is involved in tolerance to hyperosmotic conditions. Required to successfully penetrate the host plants and thus plays a key role in pathogenicity. This Verticillium dahliae (strain VdLs.17 / ATCC MYA-4575 / FGSC 10137) (Verticillium wilt) protein is Chitin synthase 6.